A 452-amino-acid polypeptide reads, in one-letter code: Translation initiation factor eIF2B subunit gamma (452 aa).

Methionine 1 carries the N-acetylmethionine modification. Serine 260 bears the Phosphoserine mark.

The protein belongs to the eIF-2B gamma/epsilon subunits family. In terms of assembly, component of the translation initiation factor 2B (eIF2B) complex which is a heterodecamer of two sets of five different subunits: alpha, beta, gamma, delta and epsilon. Subunits alpha, beta and delta comprise a regulatory subcomplex and subunits epsilon and gamma comprise a catalytic subcomplex. Within the complex, the hexameric regulatory complex resides at the center, with the two heterodimeric catalytic subcomplexes bound on opposite sides.

Its subcellular location is the cytoplasm. The protein localises to the cytosol. Activated by the chemical integrated stress response (ISR) inhibitor ISRIB which stimulates guanine nucleotide exchange factor activity for both phosphorylated and unphosphorylated eIF2. In terms of biological role, acts as a component of the translation initiation factor 2B (eIF2B) complex, which catalyzes the exchange of GDP for GTP on the eukaryotic initiation factor 2 (eIF2) complex gamma subunit. Its guanine nucleotide exchange factor activity is repressed when bound to eIF2 complex phosphorylated on the alpha subunit, thereby limiting the amount of methionyl-initiator methionine tRNA available to the ribosome and consequently global translation is repressed. This Homo sapiens (Human) protein is Translation initiation factor eIF2B subunit gamma (EIF2B3).